A 312-amino-acid chain; its full sequence is Glycerol-3-phosphate phosphatase (312 aa).

Catalysis depends on Asp-30, which acts as the Nucleophile. Residues Asp-30, Asp-32, and Asp-251 each contribute to the Mg(2+) site. Asp-32 serves as the catalytic Proton donor.

Belongs to the HAD-like hydrolase superfamily. CbbY/CbbZ/Gph/YieH family. Homodimer. Requires Mg(2+) as cofactor.

The enzyme catalyses O-phospho-L-tyrosyl-[protein] + H2O = L-tyrosyl-[protein] + phosphate. It catalyses the reaction sn-glycerol 1-phosphate + H2O = glycerol + phosphate. The catalysed reaction is sn-glycerol 3-phosphate + H2O = glycerol + phosphate. Glycerol-3-phosphate phosphatase hydrolyzing glycerol-3-phosphate into glycerol. Thereby, regulates the cellular levels of glycerol-3-phosphate a metabolic intermediate of glucose, lipid and energy metabolism. Was also shown to have a 2-phosphoglycolate phosphatase activity and a tyrosine-protein phosphatase activity. However, their physiological relevance is unclear. In vitro, also has a phosphatase activity toward ADP, ATP, GDP and GTP. This Gallus gallus (Chicken) protein is Glycerol-3-phosphate phosphatase.